We begin with the raw amino-acid sequence, 406 residues long: MTITPKNKRTSSIPKSQTATIGGEEVLKKLKGVEGDHSIAVGLSGGVDSSLTAALLVEAGWNVEGITLWLMSGKGSCCTDGLVDAAGICEQLGIPHHVIDARETFQREIIESLVKGYQEGMTPSPCSKCNRFVKFSPILEWAEQNLGLKRIATGHYARIKHLQEPIKISSAKENQIRRHQLLRGLDQNKDQSYFLYDLSQEILEKVIFPLGELKKADTRKEASRIELRTAEKPESQDLCLAEHHGSMKAFLDEYISPRNGEILLSNGQLLGQHDGIEHFTIGQRKGLGIAWKEPLHVIEIQSSTNRVIVAPRSEASRDNCTVGSINWVSIEPPSKKTIVEVQLRYRSKPVLATLTPIKPLKKDIENDRPYRCNLQFQSEQFSITPGQAAVFYEGEILLGGGIIEGN.

Residues 42-49 (GLSGGVDS) and Leu-68 each bind ATP. Cys-129 acts as the Nucleophile in catalysis. Cys-129 and Cys-239 are disulfide-bonded. ATP is bound at residue Gly-154. The tract at residues 189 to 191 (KDQ) is interaction with tRNA. Cys-239 acts as the Cysteine persulfide intermediate in catalysis. The segment at 344 to 345 (RY) is interaction with tRNA.

The protein belongs to the MnmA/TRMU family.

It localises to the cytoplasm. It carries out the reaction S-sulfanyl-L-cysteinyl-[protein] + uridine(34) in tRNA + AH2 + ATP = 2-thiouridine(34) in tRNA + L-cysteinyl-[protein] + A + AMP + diphosphate + H(+). Functionally, catalyzes the 2-thiolation of uridine at the wobble position (U34) of tRNA, leading to the formation of s(2)U34. The protein is tRNA-specific 2-thiouridylase MnmA of Prochlorococcus marinus (strain SARG / CCMP1375 / SS120).